We begin with the raw amino-acid sequence, 253 residues long: 5-oxoprolinase subunit A (253 aa).

It belongs to the LamB/PxpA family. In terms of assembly, forms a complex composed of PxpA, PxpB and PxpC.

It carries out the reaction 5-oxo-L-proline + ATP + 2 H2O = L-glutamate + ADP + phosphate + H(+). Catalyzes the cleavage of 5-oxoproline to form L-glutamate coupled to the hydrolysis of ATP to ADP and inorganic phosphate. The polypeptide is 5-oxoprolinase subunit A (Bacillus cereus (strain B4264)).